Consider the following 409-residue polypeptide: Transcriptional regulator GME11370 (409 aa).

Positions 17 to 44 (CHACAASKLKCSKEKPSCARCLKRNKPC) form a DNA-binding region, zn(2)-C6 fungal-type. A disordered region spans residues 49 to 83 (TRRAGRHHGSRSKKVPTISPASAPEPQPFSTTPPD). Basic residues predominate over residues 51-62 (RAGRHHGSRSKK).

The protein resides in the nucleus. In terms of biological role, transcriptional regulator; part of the gene cluster that mediates the biosynthesis of dibenzodioxocinones such as pestalotiollide B, a novel class of inhibitors against cholesterol ester transfer protein (CEPT). This Pestalotiopsis microspora protein is Transcriptional regulator GME11370.